Here is a 309-residue protein sequence, read N- to C-terminus: ADP-L-glycero-D-manno-heptose-6-epimerase (309 aa).

Residues 10–11 (LI), 31–32 (DN), K38, K53, 75–79 (QGACS), and N92 contribute to the NADP(+) site. Y139 (proton acceptor) is an active-site residue. K143 contacts NADP(+). Position 168 (N168) interacts with substrate. Residues V169 and K177 each coordinate NADP(+). The active-site Proton acceptor is K177. Substrate-binding positions include S179, H186, 200-203 (FAGS), R208, and Y271.

This sequence belongs to the NAD(P)-dependent epimerase/dehydratase family. HldD subfamily. Homopentamer. It depends on NADP(+) as a cofactor.

It catalyses the reaction ADP-D-glycero-beta-D-manno-heptose = ADP-L-glycero-beta-D-manno-heptose. Its pathway is nucleotide-sugar biosynthesis; ADP-L-glycero-beta-D-manno-heptose biosynthesis; ADP-L-glycero-beta-D-manno-heptose from D-glycero-beta-D-manno-heptose 7-phosphate: step 4/4. Its function is as follows. Catalyzes the interconversion between ADP-D-glycero-beta-D-manno-heptose and ADP-L-glycero-beta-D-manno-heptose via an epimerization at carbon 6 of the heptose. This chain is ADP-L-glycero-D-manno-heptose-6-epimerase, found in Histophilus somni (strain 2336) (Haemophilus somnus).